The sequence spans 523 residues: Protein nucleotidyltransferase YdiU (523 aa).

ATP contacts are provided by glycine 101, glycine 103, arginine 104, lysine 128, aspartate 140, glycine 141, arginine 198, and arginine 205. The active-site Proton acceptor is aspartate 275. 2 residues coordinate Mg(2+): asparagine 276 and aspartate 285. An ATP-binding site is contributed by aspartate 285.

It belongs to the SELO family. Mg(2+) serves as cofactor. The cofactor is Mn(2+).

It catalyses the reaction L-seryl-[protein] + ATP = 3-O-(5'-adenylyl)-L-seryl-[protein] + diphosphate. It carries out the reaction L-threonyl-[protein] + ATP = 3-O-(5'-adenylyl)-L-threonyl-[protein] + diphosphate. The catalysed reaction is L-tyrosyl-[protein] + ATP = O-(5'-adenylyl)-L-tyrosyl-[protein] + diphosphate. The enzyme catalyses L-histidyl-[protein] + UTP = N(tele)-(5'-uridylyl)-L-histidyl-[protein] + diphosphate. It catalyses the reaction L-seryl-[protein] + UTP = O-(5'-uridylyl)-L-seryl-[protein] + diphosphate. It carries out the reaction L-tyrosyl-[protein] + UTP = O-(5'-uridylyl)-L-tyrosyl-[protein] + diphosphate. Its function is as follows. Nucleotidyltransferase involved in the post-translational modification of proteins. It can catalyze the addition of adenosine monophosphate (AMP) or uridine monophosphate (UMP) to a protein, resulting in modifications known as AMPylation and UMPylation. In Aromatoleum aromaticum (strain DSM 19018 / LMG 30748 / EbN1) (Azoarcus sp. (strain EbN1)), this protein is Protein nucleotidyltransferase YdiU.